The primary structure comprises 226 residues: Transmembrane gamma-carboxyglutamic acid protein 4 (226 aa).

Positions 1 to 17 (MFPLLIVLSQLPRLTLA) are cleaved as a signal peptide. A propeptide spanning residues 18-49 (VPHCIRSLKDSEHAPEEVFASKEAANIFMHRR) is cleaved from the precursor. The Extracellular segment spans residues 50 to 113 (LLNNRFDLEL…GSDVNKEKID (64 aa)). In terms of domain architecture, Gla spans 52 to 98 (NNRFDLELFTPGDLERECYEEFCSYEEAREILGDDENTIKFWQTYSI). Cysteine 69 and cysteine 74 form a disulfide bridge. Residue glutamate 72 is modified to 4-carboxyglutamate. Residues 114 to 134 (VMSLLTGLIVAGVFLVIFGLV) form a helical membrane-spanning segment. Residues 135–226 (GYYVCLTKCK…FKKSMSLPSH (92 aa)) are Cytoplasmic-facing. Phosphoserine is present on serine 164. The LPXY motif; mediates binding to WW domain-containing proteins motif lies at 186-189 (LPSY). The short motif at 204–207 (PPPY) is the PPXY motif; mediates binding to WW domain-containing proteins element.

It belongs to the commissureless family. In terms of assembly, interacts (via cytoplasmic domain) with WW domain-containing proteins MAGI1, MAGI3, NEDD4, NEDD4L, WWTR1/TAZ and YAP1. In terms of processing, gamma-carboxyglutamate residues are formed by vitamin K dependent carboxylation. These residues are essential for the binding of calcium.

The protein resides in the endoplasmic reticulum-Golgi intermediate compartment membrane. Its subcellular location is the cell membrane. Its function is as follows. May control axon guidance across the CNS. Prevents the delivery of ROBO1 at the cell surface and down-regulates its expression. The polypeptide is Transmembrane gamma-carboxyglutamic acid protein 4 (Prrg4) (Mus musculus (Mouse)).